We begin with the raw amino-acid sequence, 128 residues long: Protein BEX1 (128 aa).

The interval 1–37 (MESKEKRAVNNLSMENTNQENEEKEEKEQVANKGEPL) is disordered. Phosphoserine is present on Ser-105. The tract at residues 107–128 (SLRAVSTDPPHHDHHDEFCLMP) is disordered. Residues 115–128 (PPHHDHHDEFCLMP) are compositionally biased toward basic and acidic residues. The his cluster stretch occupies residues 117 to 121 (HHDHH). Zn(2+) is bound at residue Cys-125.

It belongs to the BEX family. In terms of assembly, interacts with neurotrophin receptor p75NTR/NGFR. Interacts with OMP. Phosphorylated. Phosphorylation of Ser-105 protects it from the proteasome. Post-translationally, ubiquitinated. Degraded by the proteasome.

The protein resides in the nucleus. It localises to the cytoplasm. Functionally, signaling adapter molecule involved in p75NTR/NGFR signaling. Plays a role in cell cycle progression and neuronal differentiation. Inhibits neuronal differentiation in response to nerve growth factor (NGF). May act as a link between the cell cycle and neurotrophic factor signaling, possibly by functioning as an upstream modulator of receptor signaling, coordinating biological responses to external signals with internal cellular states. In absence of reductive stress, acts as a pseudosubstrate for the CRL2(FEM1B) complex: associates with FEM1B via zinc, thereby preventing association between FEM1B and its substrates. This Macaca fascicularis (Crab-eating macaque) protein is Protein BEX1 (BEX1).